The sequence spans 476 residues: Doublecortin domain-containing protein 2 (476 aa).

2 consecutive Doublecortin domains span residues 17–100 and 139–221; these read KSVL…LNYL and CTIF…LPYS. Residues 234–476 are disordered; it reads FGQKASSLPP…QQNKDYAAVA (243 aa). The segment covering 261 to 272 has biased composition (polar residues); that stretch reads STVGSSDNSSPQ. Phosphoserine is present on S270. Residues 279-289 show a composition bias toward basic and acidic residues; sequence KKEDVNSEKLT. Over residues 296–306 the composition is skewed to polar residues; it reads KLKNSQETIPN. The span at 354-366 shows a compositional bias: basic and acidic residues; that stretch reads EKANKDAEQKEDF. A compositionally biased stretch (low complexity) spans 415–426; sequence ELQQVNNELQLV. The span at 446–455 shows a compositional bias: basic and acidic residues; the sequence is DPQRPPRPEV.

Interacts with DVL1, DVL2 and DVL3. Ubiquitously expressed. In brain, highly expressed in the entorhinal cortex, inferior temporal cortex, medial temporal cortex, hypothalamus, amygdala and hippocampus. Expressed in liver by cholangiocytes, the epithelial cells of the bile ducts (at protein level).

It localises to the cell projection. The protein localises to the cilium. Its subcellular location is the cytoplasm. The protein resides in the cytoskeleton. It is found in the cilium axoneme. It localises to the kinocilium. Functionally, protein that plays a role in the inhibition of canonical Wnt signaling pathway. May be involved in neuronal migration during development of the cerebral neocortex. Involved in the control of ciliogenesis and ciliary length. This is Doublecortin domain-containing protein 2 (DCDC2) from Homo sapiens (Human).